The sequence spans 131 residues: Small ribosomal subunit protein uS8 (131 aa).

This sequence belongs to the universal ribosomal protein uS8 family. As to quaternary structure, part of the 30S ribosomal subunit. Contacts proteins S5 and S12.

One of the primary rRNA binding proteins, it binds directly to 16S rRNA central domain where it helps coordinate assembly of the platform of the 30S subunit. The protein is Small ribosomal subunit protein uS8 of Verminephrobacter eiseniae (strain EF01-2).